The sequence spans 286 residues: CLA biosynthesis dehydrogenase/reductase (286 aa).

Residues aspartate 37, aspartate 63, valine 64, asparagine 90, tyrosine 156, and lysine 160 each coordinate NAD(+). Catalysis depends on tyrosine 156, which acts as the Proton acceptor.

It belongs to the short-chain dehydrogenases/reductases (SDR) family.

Its subcellular location is the cytoplasm. The catalysed reaction is (10S)-hydroxy-(12Z)-octadecenoate + NAD(+) = 10-oxo-(12Z)-octadecenoate + NADH + H(+). It carries out the reaction 10-oxo-(11E)-octadecenoate + NADH + H(+) = 10-hydroxy-(11E)-octadecenoate + NAD(+). The enzyme catalyses 10-oxooctadecanoate + NADH + H(+) = 10-hydroxyoctadecanoate + NAD(+). It functions in the pathway lipid metabolism; fatty acid metabolism. In terms of biological role, is involved in a saturation metabolic pathway of polyunsaturated fatty acids, that detoxifies unsaturated fatty acids and generates hydroxy fatty acids, oxo fatty acids, conjugated fatty acids such as conjugated linoleic acids (CLAs), and partially saturated trans-fatty acids as intermediates. CLA-DH catalyzes the dehydrogenation/reduction steps in the production of 10-oxo-(12Z)-octadecenoate, 10-hydroxy-(11E)-octadecenoate and 10-hydroxyoctadecanoate during linoleate metabolism. As part of the gut microbiome, this enzyme modifies host fatty acid composition and is expected to improve human health by altering lipid metabolism related to the onset of metabolic syndrome. The protein is CLA biosynthesis dehydrogenase/reductase of Lactiplantibacillus plantarum (Lactobacillus plantarum).